A 270-amino-acid polypeptide reads, in one-letter code: Elongation factor Tu (270 aa).

The tr-type G domain occupies 1 to 103 (GILVVSAADG…AVDDYIPTPE (103 aa)). 35–38 (NKVD) contacts GTP.

Belongs to the TRAFAC class translation factor GTPase superfamily. Classic translation factor GTPase family. EF-Tu/EF-1A subfamily. Monomer.

Its subcellular location is the cytoplasm. The enzyme catalyses GTP + H2O = GDP + phosphate + H(+). GTP hydrolase that promotes the GTP-dependent binding of aminoacyl-tRNA to the A-site of ribosomes during protein biosynthesis. The chain is Elongation factor Tu (tuf) from Staphylococcus warneri.